The sequence spans 232 residues: Platelet-activating factor acetylhydrolase IB subunit alpha1 (232 aa).

The disordered stretch occupies residues 1–20; that stretch reads MSGEGENPASKPTPVQDVQG. The residue at position 2 (Ser-2) is an N-acetylserine. Ser-2 is subject to Phosphoserine. Catalysis depends on residues Ser-48, Asp-193, and His-196.

The protein belongs to the 'GDSL' lipolytic enzyme family. Platelet-activating factor acetylhydrolase IB beta/gamma subunits subfamily. In terms of assembly, forms a catalytic dimer which is either homodimer (alpha1/alpha1 homodimer) or heterodimer with PAFAH1B2 (alpha1/alpha2 heterodimer). Component of the cytosolic (PAF-AH (I)) heterotetrameric enzyme, which is composed of PAFAH1B1 (beta), PAFAH1B2 (alpha2) and PAFAH1B3 (alpha1) subunits. The catalytic activity of the enzyme resides in the alpha1 (PAFAH1B3) and alpha2 (PAFAH1B2) subunits, whereas the beta subunit (PAFAH1B1) has regulatory activity. Trimer formation is not essential for the catalytic activity. Interacts with VLDLR; this interaction may modulate the Reelin pathway. In terms of tissue distribution, expressed in brain, spleen, lung, liver, kidney and testis. Not expressed in heart and skeletal muscle. Expressed in fetal brain as heterodimer. Not expressed in adult tissues. Expressed exclusively in granule cells.

The protein localises to the cytoplasm. It carries out the reaction a 1-O-alkyl-2-acetyl-sn-glycero-3-phosphocholine + H2O = a 1-O-alkyl-sn-glycero-3-phosphocholine + acetate + H(+). The catalysed reaction is 1-O-hexadecyl-2-acetyl-sn-glycero-3-phosphocholine + H2O = 1-O-hexadecyl-sn-glycero-3-phosphocholine + acetate + H(+). It catalyses the reaction 1-O-hexadecyl-2-acetyl-sn-glycero-3-phosphate + H2O = 1-O-hexadecyl-sn-glycero-3-phosphate + acetate + H(+). Its activity is regulated as follows. Beta subunit (PAFAH1B1) inhibits the acetylhydrolase activity of the alpha1/alpha1 catalytic homodimer. Its function is as follows. Alpha1 catalytic subunit of the cytosolic type I platelet-activating factor (PAF) acetylhydrolase (PAF-AH (I)) heterotetrameric enzyme that catalyzes the hydrolyze of the acetyl group at the sn-2 position of PAF and its analogs and modulates the action of PAF. The activity and substrate specificity of PAF-AH (I) are affected by its subunit composition. Both alpha1/alpha1 homodimer (PAFAH1B3/PAFAH1B3 homodimer) and alpha1/alpha2 heterodimer(PAFAH1B3/PAFAH1B2 heterodimer) hydrolyze 1-O-alkyl-2-acetyl-sn-glycero-3-phosphoric acid (AAGPA) more efficiently than PAF, but they have little hydrolytic activity towards 1-O-alkyl-2-acetyl-sn-glycero-3-phosphorylethanolamine (AAGPE). Plays an important role during the development of brain. The chain is Platelet-activating factor acetylhydrolase IB subunit alpha1 from Rattus norvegicus (Rat).